The sequence spans 607 residues: Pogo transposable element with KRAB domain (607 aa).

A coiled-coil region spans residues 8-29 (LNLTLKEEQKEEEVEIQELEDG). Lysine 13 is covalently cross-linked (Glycyl lysine isopeptide (Lys-Gly) (interchain with G-Cter in SUMO2)). The KRAB domain occupies 47-118 (ALFDEVAIYF…DEWRLQGVTF (72 aa)). Residues 250-323 (AFRGPKNGRF…MRRYDLSLRH (74 aa)) form the HTH CENPB-type domain. Residues 355-567 (YEVAQMGNAD…ISSESIVQGF (213 aa)) form the DDE-1 domain. Lysine 384 participates in a covalent cross-link: Glycyl lysine isopeptide (Lys-Gly) (interchain with G-Cter in SUMO2). Positions 588-607 (GELPKEPPKECGPESVAEGD) are disordered. Over residues 589-599 (ELPKEPPKECG) the composition is skewed to basic and acidic residues.

The protein localises to the nucleus. The sequence is that of Pogo transposable element with KRAB domain (Pogk) from Mus musculus (Mouse).